The sequence spans 129 residues: Small ribosomal subunit protein uS8 (129 aa).

It belongs to the universal ribosomal protein uS8 family. In terms of assembly, part of the 30S ribosomal subunit.

Functionally, one of the primary rRNA binding proteins, it binds directly to 16S rRNA central domain where it helps coordinate assembly of the platform of the 30S subunit. The polypeptide is Small ribosomal subunit protein uS8 (Thermoplasma volcanium (strain ATCC 51530 / DSM 4299 / JCM 9571 / NBRC 15438 / GSS1)).